The primary structure comprises 451 residues: Probable NADH dehydrogenase (451 aa).

Residue 41 to 71 (KLIILGCGWGSYSFLKNLNSIKYDITVISPR) participates in FAD binding. Position 199–236 (199–236 (LSFVIVGGGATGIEFTSELNDFFSEDLSRLFPFVPVNE)) interacts with NAD(+).

The protein belongs to the NADH dehydrogenase family. FAD serves as cofactor.

It carries out the reaction a ubiquinone + NADH + 5 H(+)(in) = a ubiquinol + NAD(+) + 4 H(+)(out). The protein is Probable NADH dehydrogenase of Dictyostelium discoideum (Social amoeba).